A 21-amino-acid chain; its full sequence is Protein YadW (21 aa).

The sequence is that of Protein YadW from Escherichia coli (strain K12).